A 210-amino-acid chain; its full sequence is Ribosomal RNA large subunit methyltransferase E (210 aa).

Residues Gly-61, Trp-63, Asp-81, Asp-97, and Asp-122 each contribute to the S-adenosyl-L-methionine site. The active-site Proton acceptor is Lys-162.

This sequence belongs to the class I-like SAM-binding methyltransferase superfamily. RNA methyltransferase RlmE family.

It is found in the cytoplasm. It carries out the reaction uridine(2552) in 23S rRNA + S-adenosyl-L-methionine = 2'-O-methyluridine(2552) in 23S rRNA + S-adenosyl-L-homocysteine + H(+). Its function is as follows. Specifically methylates the uridine in position 2552 of 23S rRNA at the 2'-O position of the ribose in the fully assembled 50S ribosomal subunit. This chain is Ribosomal RNA large subunit methyltransferase E, found in Xanthomonas axonopodis pv. citri (strain 306).